A 276-amino-acid chain; its full sequence is 2,3,4,5-tetrahydropyridine-2,6-dicarboxylate N-succinyltransferase (276 aa).

Substrate-binding residues include Arg104 and Asp141.

The protein belongs to the transferase hexapeptide repeat family. As to quaternary structure, homotrimer.

The protein resides in the cytoplasm. It carries out the reaction (S)-2,3,4,5-tetrahydrodipicolinate + succinyl-CoA + H2O = (S)-2-succinylamino-6-oxoheptanedioate + CoA. It participates in amino-acid biosynthesis; L-lysine biosynthesis via DAP pathway; LL-2,6-diaminopimelate from (S)-tetrahydrodipicolinate (succinylase route): step 1/3. The chain is 2,3,4,5-tetrahydropyridine-2,6-dicarboxylate N-succinyltransferase from Pseudoalteromonas translucida (strain TAC 125).